The sequence spans 404 residues: Pyruvate-flavodoxin oxidoreductase (404 aa).

Belongs to the pyruvate:ferredoxin/flavodoxin oxidoreductase family.

It carries out the reaction oxidized [flavodoxin] + pyruvate + CoA + 2 H(+) = reduced [flavodoxin] + acetyl-CoA + CO2. Oxidoreductase required for the transfer of electrons from pyruvate to flavodoxin, which reduces nitrogenase. In Nostoc sp. (strain ATCC 29151 / PCC 7119) (Anabaena sp.), this protein is Pyruvate-flavodoxin oxidoreductase (nifJ).